An 83-amino-acid chain; its full sequence is Exodeoxyribonuclease 7 small subunit (83 aa).

The protein belongs to the XseB family. In terms of assembly, heterooligomer composed of large and small subunits.

The protein localises to the cytoplasm. The catalysed reaction is Exonucleolytic cleavage in either 5'- to 3'- or 3'- to 5'-direction to yield nucleoside 5'-phosphates.. Its function is as follows. Bidirectionally degrades single-stranded DNA into large acid-insoluble oligonucleotides, which are then degraded further into small acid-soluble oligonucleotides. This chain is Exodeoxyribonuclease 7 small subunit, found in Rhizobium meliloti (strain 1021) (Ensifer meliloti).